The chain runs to 64 residues: MSRKCEICGKGPSTGNNVSHANNKTRTTWYPNLQKVKAKAANGSVSTIKVCTRCIRSGSVTKAL.

Belongs to the bacterial ribosomal protein bL28 family.

This is Large ribosomal subunit protein bL28 from Trichlorobacter lovleyi (strain ATCC BAA-1151 / DSM 17278 / SZ) (Geobacter lovleyi).